The chain runs to 144 residues: Protein MIX23 (144 aa).

Ala-2 carries the N-acetylalanine modification. A coiled-coil region spans residues 82 to 120 (VKNLREEREKNLDDLTLLKQLRKEQTKLKWMQSELNVEE). Residue Lys-100 is modified to N6-acetyllysine.

Belongs to the MIX23 family.

This Homo sapiens (Human) protein is Protein MIX23.